The sequence spans 157 residues: Protein Smg homolog (157 aa).

The protein belongs to the Smg family.

The polypeptide is Protein Smg homolog (Pseudoalteromonas translucida (strain TAC 125)).